We begin with the raw amino-acid sequence, 272 residues long: MTSSSSNRPFSHRSPNTFLTYPQCPEQPEIISQRIWDLCSHWTPLYIICAREAHRDGNQCLHALIQTEKPVRTTDSRFFDIDGFHPNIQSAISPNKVRDYITKEPLALFERGTFIPRKKSFLGNSSKGNSDKKPSKDEIMRDIISHATSKQEYLSMVQKSLPYDWSTKLQYFEYSANKLFPDIQEEFINPHPTSEPDLLCNESIKDWLQPNIYQVSPQAYLLLQPNCYSIDDAISDLEWLDDLTSKQIMEQGSAASTSSVQQGQENLHGPEA.

A CRESS-DNA virus Rep endonuclease domain is found at 11–114 (SHRSPNTFLT…PLALFERGTF (104 aa)). The short motif at 18-21 (FLTY) is the RCR-1 element. The a divalent metal cation site is built by Glu52 and His62. Positions 60 to 65 (CLHALI) match the RCR-2 motif. The active-site For DNA cleavage activity is the Tyr100. The RCR-3 motif lies at 100–103 (YITK). Glu104 lines the a divalent metal cation pocket. The tract at residues 175–187 (SANKLFPDIQEEF) is oligomerization. An LXCXE motif, interaction with host RBR1 motif is present at residues 198-202 (LLCNE). Residues 221–230 (LLLQPNCYSI) form a transactivation region. A compositionally biased stretch (polar residues) spans 251 to 265 (QGSAASTSSVQQGQE). The tract at residues 251 to 272 (QGSAASTSSVQQGQENLHGPEA) is disordered.

This sequence belongs to the geminiviridae Rep protein family. Homooligomer. Interacts (via LXCXE domain) with host retinoblastoma-related protein 1 (RBR1), and may thereby deregulate the host cell cycle. Part of the C- and V-complexes which are RepA-Rep-DNA complexes involved in the c-sense and v-sense transcription.

The protein localises to the host nucleus. Its subcellular location is the host cytoplasm. In terms of biological role, implicated in enhancement of V-sense gene expression. Acts a an inhibitor of C-sense gene transcription. This Avena sativa (Oat) protein is Replication-associated protein A.